The chain runs to 302 residues: Melibiose operon regulatory protein (302 aa).

The HTH araC/xylS-type domain maps to S194–L292. 2 consecutive DNA-binding regions (H-T-H motif) follow at residues N211–M232 and I259–V282.

Its function is as follows. Transcription activator for the expression of the melAB operon. MelR binds at two sites located upstream of the melAB transcription site. The chain is Melibiose operon regulatory protein (melR) from Escherichia coli O6:H1 (strain CFT073 / ATCC 700928 / UPEC).